Reading from the N-terminus, the 402-residue chain is Methylthioribose-1-phosphate isomerase (402 aa).

The active-site Proton donor is D275.

The protein belongs to the eIF-2B alpha/beta/delta subunits family. MtnA subfamily.

It is found in the cytoplasm. The protein localises to the nucleus. The enzyme catalyses 5-(methylsulfanyl)-alpha-D-ribose 1-phosphate = 5-(methylsulfanyl)-D-ribulose 1-phosphate. It participates in amino-acid biosynthesis; L-methionine biosynthesis via salvage pathway; L-methionine from S-methyl-5-thio-alpha-D-ribose 1-phosphate: step 1/6. Functionally, catalyzes the interconversion of methylthioribose-1-phosphate (MTR-1-P) into methylthioribulose-1-phosphate (MTRu-1-P). In Clavispora lusitaniae (strain ATCC 42720) (Yeast), this protein is Methylthioribose-1-phosphate isomerase.